Consider the following 660-residue polypeptide: Acetyl-coenzyme A synthetase (660 aa).

CoA is bound by residues 197–200 (RGGK) and T317. ATP is bound by residues 397-399 (GEP), 421-426 (DTWWQT), D512, and R528. S536 contributes to the CoA binding site. R539 serves as a coordination point for ATP. Mg(2+) contacts are provided by V550 and V555. K625 is modified (N6-acetyllysine).

The protein belongs to the ATP-dependent AMP-binding enzyme family. Mg(2+) serves as cofactor. Acetylated. Deacetylation by the SIR2-homolog deacetylase activates the enzyme.

The enzyme catalyses acetate + ATP + CoA = acetyl-CoA + AMP + diphosphate. Functionally, catalyzes the conversion of acetate into acetyl-CoA (AcCoA), an essential intermediate at the junction of anabolic and catabolic pathways. AcsA undergoes a two-step reaction. In the first half reaction, AcsA combines acetate with ATP to form acetyl-adenylate (AcAMP) intermediate. In the second half reaction, it can then transfer the acetyl group from AcAMP to the sulfhydryl group of CoA, forming the product AcCoA. This Paraburkholderia phymatum (strain DSM 17167 / CIP 108236 / LMG 21445 / STM815) (Burkholderia phymatum) protein is Acetyl-coenzyme A synthetase.